The sequence spans 115 residues: Protein Wnt-2 (115 aa).

Ser-1 carries the O-palmitoleoyl serine; by PORCN lipid modification. Residues Cys-81 and Cys-96 are joined by a disulfide bond. An N-linked (GlcNAc...) asparagine glycan is attached at Asn-82.

Belongs to the Wnt family. Palmitoleoylation is required for efficient binding to frizzled receptors. Depalmitoleoylation leads to Wnt signaling pathway inhibition.

Its subcellular location is the secreted. The protein resides in the extracellular space. It is found in the extracellular matrix. Functionally, ligand for members of the frizzled family of seven transmembrane receptors. Probable developmental protein. May be a signaling molecule which affects the development of discrete regions of tissues. Is likely to signal over only few cell diameters. The sequence is that of Protein Wnt-2 (WNT-2) from Strongylocentrotus purpuratus (Purple sea urchin).